The primary structure comprises 356 residues: Malate dehydrogenase, glyoxysomal (356 aa).

The N-terminal 36 residues, 1–36 (MEDAAAAARRMERLASHLRPPASQMEESPLLRGSNC), are a transit peptide targeting the glyoxysome. NAD(+)-binding positions include 51-57 (GASGGIG) and D77. Substrate-binding residues include R124 and R130. Residues N137 and 160–162 (ISN) contribute to the NAD(+) site. The substrate site is built by N162 and R196. H220 functions as the Proton acceptor in the catalytic mechanism. Residue M271 participates in NAD(+) binding.

It belongs to the LDH/MDH superfamily. MDH type 1 family. Homodimer.

It localises to the glyoxysome. The catalysed reaction is (S)-malate + NAD(+) = oxaloacetate + NADH + H(+). This chain is Malate dehydrogenase, glyoxysomal, found in Oryza sativa subsp. japonica (Rice).